The primary structure comprises 279 residues: Lyso-glycine lipid O-acyltransferase (279 aa).

This sequence belongs to the O-acyltransferase GlsA family.

The catalysed reaction is a lyso-glycine lipid + a fatty acyl-[ACP] = a glycine lipid + holo-[ACP]. The enzyme catalyses N-[(3R)-3-hydroxyhexadecanoyl]-glycine + hexadecanoyl-[ACP] = N-[(3R)-3-(hexadecanoyloxy)hexadecanoyl]-glycine + holo-[ACP]. The protein operates within lipid metabolism. Is involved in the production of glycine lipids (GL), which are phosphorus-free membrane lipids. Catalyzes the second step of GL biosynthesis, i.e. the O-acylation of the hydroxyl group of lyso-glycine lipids, resulting in the production of the mature diacylated glycine lipids. This is Lyso-glycine lipid O-acyltransferase from Phocaeicola vulgatus (strain ATCC 8482 / DSM 1447 / JCM 5826 / CCUG 4940 / NBRC 14291 / NCTC 11154) (Bacteroides vulgatus).